A 338-amino-acid polypeptide reads, in one-letter code: Phenylalanine--tRNA ligase alpha subunit (338 aa).

E252 is a binding site for Mg(2+).

The protein belongs to the class-II aminoacyl-tRNA synthetase family. Phe-tRNA synthetase alpha subunit type 1 subfamily. Tetramer of two alpha and two beta subunits. Mg(2+) serves as cofactor.

It is found in the cytoplasm. It carries out the reaction tRNA(Phe) + L-phenylalanine + ATP = L-phenylalanyl-tRNA(Phe) + AMP + diphosphate + H(+). The chain is Phenylalanine--tRNA ligase alpha subunit from Pseudomonas aeruginosa (strain ATCC 15692 / DSM 22644 / CIP 104116 / JCM 14847 / LMG 12228 / 1C / PRS 101 / PAO1).